Consider the following 492-residue polypeptide: Tyrosinase-like protein 1 (492 aa).

Positions 1–22 (MDKMRTLQSLIVKLTLLYGALC) are cleaved as a signal peptide. Histidine 147, histidine 155, histidine 164, histidine 289, histidine 293, and histidine 316 together coordinate Cu cation. The tract at residues 472–492 (SEPPLQLEGPSFTSSFDDPRI) is disordered. Over residues 482–492 (SFTSSFDDPRI) the composition is skewed to polar residues.

The cofactor is Cu(2+). Prismatic layer of shell (at protein level). Expressed primarily in the mantle with highest level in the mantle edge and lower level in the mantle pallium.

Its subcellular location is the secreted. The polypeptide is Tyrosinase-like protein 1 (Margaritifera margaritifera (Freshwater pearl mussel)).